The primary structure comprises 120 residues: Large ribosomal subunit protein uL18 (120 aa).

The protein belongs to the universal ribosomal protein uL18 family. In terms of assembly, part of the 50S ribosomal subunit; part of the 5S rRNA/L5/L18/L25 subcomplex. Contacts the 5S and 23S rRNAs.

This is one of the proteins that bind and probably mediate the attachment of the 5S RNA into the large ribosomal subunit, where it forms part of the central protuberance. The sequence is that of Large ribosomal subunit protein uL18 from Bacillus licheniformis (strain ATCC 14580 / DSM 13 / JCM 2505 / CCUG 7422 / NBRC 12200 / NCIMB 9375 / NCTC 10341 / NRRL NRS-1264 / Gibson 46).